The primary structure comprises 147 residues: Putative pre-16S rRNA nuclease (147 aa).

It belongs to the YqgF nuclease family.

The protein localises to the cytoplasm. Functionally, could be a nuclease involved in processing of the 5'-end of pre-16S rRNA. The protein is Putative pre-16S rRNA nuclease of Latilactobacillus sakei subsp. sakei (strain 23K) (Lactobacillus sakei subsp. sakei).